Here is a 548-residue protein sequence, read N- to C-terminus: MSSPPLHGLSSVGHLSRDPPPRSWSPRDKCSYLGLSHGNLRVHYKGHGKTSKDAASVRSTHPIPAACGIFYFEVKIISKGRDGYMGIGLSTQGVNLNRLPGWDKHSYGYHGDDGHSFCSSGTGQPYGPTFTTGDVIGCCVNLIDNTCFYTKNGHSLGIAFTDLPPNLYPTVGLQTPGEVVDANFGQSPFVFDIEDYIREWRSKIQAQIERFPVAGEWQSMIQRMVSSYLVHHGYCSTAEAFAKSTDQTVQEELASIKNRQRIQKLVLSGRMGEAIETTQQLYPSLLERNPNLLFTLKVRQFIEMVNGTDSEVRCLGNRSLKSPDGCLGSDSNCSNGIISNKAHQTHCHSKSQSSNLNVTELNSINMTMSHQLNSYSSNDVEMETDHYSNGFSASTSNGFLNGSSRHEPELEECDTEMEVDTSHGRRQLCGGSQAAVERMICFGRELQAMSEQLRRERGKNATNKNMLKDAFSLLAYSDPWNSPVGYQLDPIQREHVCSSLNSAILDIHNLPKQPPLSLALEQASQCLEMMAQCGIGSCAFARVADYLH.

The disordered stretch occupies residues 1–23 (MSSPPLHGLSSVGHLSRDPPPRS). A B30.2/SPRY domain is found at 2–189 (SSPPLHGLSS…VDANFGQSPF (188 aa)). The LisH domain occupies 217–249 (WQSMIQRMVSSYLVHHGYCSTAEAFAKSTDQTV). Residues 255 to 312 (SIKNRQRIQKLVLSGRMGEAIETTQQLYPSLLERNPNLLFTLKVRQFIEMVNGTDSEV) enclose the CTLH domain.

This sequence belongs to the RANBP9/10 family. As to quaternary structure, identified in the CTLH complex that contains at least MAEA, RMND5A (or alternatively its paralog RMND5B), GID8, WDR26, and RANBP9 and/or RANBP10.

The protein resides in the cytoplasm. It is found in the cell membrane. The protein localises to the nucleus. May act as scaffolding protein, and as adapter protein to couple membrane receptors to intracellular signaling pathways. Acts as a mediator of cell spreading and actin cytoskeleton rearrangement. Core component of the CTLH E3 ubiquitin-protein ligase complex that mediates ubiquitination and subsequent proteasomal degradation of target proteins. The polypeptide is Ran-binding protein 9 (ranbp9) (Xenopus laevis (African clawed frog)).